The primary structure comprises 371 residues: tRNA-specific 2-thiouridylase MnmA (371 aa).

ATP is bound by residues 12-19 (GMSGGVDS) and M38. An interaction with target base in tRNA region spans residues 98-100 (NPD). Catalysis depends on C103, which acts as the Nucleophile. The cysteines at positions 103 and 200 are disulfide-linked. Position 128 (G128) interacts with ATP. Residues 150–152 (KDQ) form an interaction with tRNA region. Catalysis depends on C200, which acts as the Cysteine persulfide intermediate. The interval 312–313 (RY) is interaction with tRNA.

The protein belongs to the MnmA/TRMU family. Interacts with TusE.

Its subcellular location is the cytoplasm. It catalyses the reaction S-sulfanyl-L-cysteinyl-[protein] + uridine(34) in tRNA + AH2 + ATP = 2-thiouridine(34) in tRNA + L-cysteinyl-[protein] + A + AMP + diphosphate + H(+). Its function is as follows. Catalyzes the 2-thiolation of uridine at the wobble position (U34) of tRNA(Lys), tRNA(Glu) and tRNA(Gln), leading to the formation of s(2)U34, the first step of tRNA-mnm(5)s(2)U34 synthesis. Sulfur is provided by IscS, via a sulfur-relay system. Binds ATP and its substrate tRNAs. The protein is tRNA-specific 2-thiouridylase MnmA of Yersinia pestis bv. Antiqua (strain Antiqua).